Reading from the N-terminus, the 783-residue chain is Probable potassium transporter 2 (783 aa).

At 1–21 (MDAEAGVGGADQLPWRQHYRN) the chain is on the cytoplasmic side. The chain crosses the membrane as a helical span at residues 22–42 (LLLLAYQSFGVVYGDLSTSPL). The Extracellular portion of the chain corresponds to 43–61 (YVYKSTFSGRLRRYQDEQT). A helical transmembrane segment spans residues 62–82 (VFGVLSLIFWTFTLIPLLKYV). The Cytoplasmic portion of the chain corresponds to 83-152 (TIVLSADDNG…FMEKHKNART (70 aa)). Residues 153-173 (VLLLIVLCGASMMIGDGILTP) traverse the membrane as a helical segment. At 174 to 189 (AISVLSSMSGLKVRAT) the chain is on the extracellular side. The chain crosses the membrane as a helical span at residues 190–210 (GLHDRSVVLLSCIVLVGLFAL). Over 211 to 217 (QHRGTQK) the chain is Cytoplasmic. The helical transmembrane segment at 218 to 238 (VAFMFAPIVVIWLFCIGGIGL) threads the bilayer. The Extracellular portion of the chain corresponds to 239–268 (YNIIHWNPRIYQALSPYYIVKFFRTTGKDG). Residues 269 to 289 (WIALGGILLSMTGCEAMFADL) form a helical membrane-spanning segment. The Cytoplasmic segment spans residues 290 to 298 (GHFTSASVR). The chain crosses the membrane as a helical span at residues 299–319 (LAFITIIYPCLILQYMGQAAF). The Extracellular segment spans residues 320 to 338 (LSKNILDMPTGFYDSIPGP). A helical membrane pass occupies residues 339 to 359 (IFWPVFVVATLAAVVGSQAVI). Residues 360–390 (SATFSIVKQCHSLGCFPRVKVVHTSRWIYGQ) lie on the Cytoplasmic side of the membrane. A helical transmembrane segment spans residues 391–411 (IYIPEINWILMVLCVAVTVAF). Residues 412–422 (RDITLIGNAYG) lie on the Extracellular side of the membrane. The chain crosses the membrane as a helical span at residues 423 to 443 (VACMTVMFVTTFLMALIMIFV). Residues 444-447 (WQKN) lie on the Cytoplasmic side of the membrane. A helical transmembrane segment spans residues 448–468 (IIFALSFFLLFGSVEVVYLSS). Topologically, residues 469–475 (SLMKVTQ) are extracellular. A helical membrane pass occupies residues 476–496 (GGWVPLVLALIFMSVMYIWHY). The Cytoplasmic segment spans residues 497-783 (GTRKKYQYDL…LIEVGMAYQV (287 aa)). Positions 662 to 691 (DLADSMTMRSTKSESLRSLQSSYEQESPNV) are disordered. Polar residues predominate over residues 677–691 (LRSLQSSYEQESPNV).

This sequence belongs to the HAK/KUP transporter (TC 2.A.72.3) family.

It is found in the cell membrane. The catalysed reaction is K(+)(in) = K(+)(out). It catalyses the reaction Na(+)(in) = Na(+)(out). In terms of biological role, high-affinity potassium transporter. Can transport sodium under high sodium and low potassium concentrations in the extracellular environment. The sequence is that of Probable potassium transporter 2 (HAK2) from Oryza sativa subsp. japonica (Rice).